The following is a 342-amino-acid chain: Ferrochelatase (342 aa).

Positions 188 and 268 each coordinate Fe cation.

It belongs to the ferrochelatase family.

It localises to the cytoplasm. It carries out the reaction heme b + 2 H(+) = protoporphyrin IX + Fe(2+). Its pathway is porphyrin-containing compound metabolism; protoheme biosynthesis; protoheme from protoporphyrin-IX: step 1/1. In terms of biological role, catalyzes the ferrous insertion into protoporphyrin IX. This chain is Ferrochelatase, found in Rickettsia conorii (strain ATCC VR-613 / Malish 7).